A 104-amino-acid chain; its full sequence is L-rhamnose mutarotase (104 aa).

Tyr-18 provides a ligand contact to substrate. The Proton donor role is filled by His-22. Substrate contacts are provided by residues Tyr-41 and Trp-76–Trp-77.

It belongs to the rhamnose mutarotase family. Homodimer.

Its subcellular location is the cytoplasm. The enzyme catalyses alpha-L-rhamnose = beta-L-rhamnose. It participates in carbohydrate metabolism; L-rhamnose metabolism. In terms of biological role, involved in the anomeric conversion of L-rhamnose. This Bacteroides thetaiotaomicron (strain ATCC 29148 / DSM 2079 / JCM 5827 / CCUG 10774 / NCTC 10582 / VPI-5482 / E50) protein is L-rhamnose mutarotase.